The sequence spans 150 residues: 1,4-dihydroxy-2-naphthoyl-CoA hydrolase (150 aa).

Aspartate 22 is a catalytic residue.

This sequence belongs to the 4-hydroxybenzoyl-CoA thioesterase family. DHNA-CoA hydrolase subfamily.

It catalyses the reaction 1,4-dihydroxy-2-naphthoyl-CoA + H2O = 1,4-dihydroxy-2-naphthoate + CoA + H(+). It participates in cofactor biosynthesis; phylloquinone biosynthesis. It functions in the pathway quinol/quinone metabolism; 1,4-dihydroxy-2-naphthoate biosynthesis; 1,4-dihydroxy-2-naphthoate from chorismate: step 7/7. In terms of biological role, catalyzes the hydrolysis of 1,4-dihydroxy-2-naphthoyl-CoA (DHNA-CoA) to 1,4-dihydroxy-2-naphthoate (DHNA), a reaction involved in phylloquinone (vitamin K1) biosynthesis. The polypeptide is 1,4-dihydroxy-2-naphthoyl-CoA hydrolase (Prochlorococcus marinus (strain NATL1A)).